Consider the following 288-residue polypeptide: Nucleotide-binding protein Pcar_1935 (288 aa).

11-18 (GLSGSGKT) contacts ATP. 62–65 (DVRN) provides a ligand contact to GTP.

The protein belongs to the RapZ-like family.

Functionally, displays ATPase and GTPase activities. The protein is Nucleotide-binding protein Pcar_1935 of Syntrophotalea carbinolica (strain DSM 2380 / NBRC 103641 / GraBd1) (Pelobacter carbinolicus).